We begin with the raw amino-acid sequence, 60 residues long: Large ribosomal subunit protein uL30 (60 aa).

It belongs to the universal ribosomal protein uL30 family. Part of the 50S ribosomal subunit.

This is Large ribosomal subunit protein uL30 from Paraburkholderia phytofirmans (strain DSM 17436 / LMG 22146 / PsJN) (Burkholderia phytofirmans).